A 445-amino-acid chain; its full sequence is MDLELDEYYNKTLATENNTAATRNSDFPVWDDYKSSVDDLQYFLIGLYTFVSLLGFMGNLLILMALMKKRNQKTTVNFLIGNLAFSDILVVLFCSPFTLTSVLLDQWMFGKVMCHIMPFLQCVSVLVSTLILISIAIVRYHMIKHPISNNLTANHGYFLIATVWTLGFAICSPLPVFHSLVELQETFGSALLSSRYLCVESWPSDSYRIAFTISLLLVQYILPLVCLTVSHTSVCRSISCGLSNKENRLEENEMINLTLHPSKKSGPQVKLSGSHKWSYSFIKKHRRRYSKKTACVLPAPERPSQENHSRILPENFGSVRSQLSSSSKFIPGVPTCFEIKPEENSDVHELRVKRSVTRIKKRSRSVFYRLTILILVFAVSWMPLHLFHVVTDFNDNLISNRHFKLVYCICHLLGMMSCCLNPILYGFLNNGIKADLVSLIHCLHM.

Over 1 to 42 (MDLELDEYYNKTLATENNTAATRNSDFPVWDDYKSSVDDLQY) the chain is Extracellular. N-linked (GlcNAc...) asparagine glycosylation is found at asparagine 10 and asparagine 17. The helical transmembrane segment at 43–63 (FLIGLYTFVSLLGFMGNLLIL) threads the bilayer. Over 64 to 77 (MALMKKRNQKTTVN) the chain is Cytoplasmic. The helical transmembrane segment at 78–98 (FLIGNLAFSDILVVLFCSPFT) threads the bilayer. The Extracellular portion of the chain corresponds to 99–117 (LTSVLLDQWMFGKVMCHIM). Cysteine 114 and cysteine 198 are disulfide-bonded. A helical membrane pass occupies residues 118 to 138 (PFLQCVSVLVSTLILISIAIV). Residues 139-156 (RYHMIKHPISNNLTANHG) are Cytoplasmic-facing. Residues 157–177 (YFLIATVWTLGFAICSPLPVF) traverse the membrane as a helical segment. At 178–208 (HSLVELQETFGSALLSSRYLCVESWPSDSYR) the chain is on the extracellular side. The helical transmembrane segment at 209–229 (IAFTISLLLVQYILPLVCLTV) threads the bilayer. Residues 230–369 (SHTSVCRSIS…KKRSRSVFYR (140 aa)) lie on the Cytoplasmic side of the membrane. Residues 370-390 (LTILILVFAVSWMPLHLFHVV) form a helical membrane-spanning segment. The Extracellular portion of the chain corresponds to 391 to 407 (TDFNDNLISNRHFKLVY). The chain crosses the membrane as a helical span at residues 408-428 (CICHLLGMMSCCLNPILYGFL). Residues 429–445 (NNGIKADLVSLIHCLHM) lie on the Cytoplasmic side of the membrane. Cysteine 442 carries S-palmitoyl cysteine lipidation.

It belongs to the G-protein coupled receptor 1 family. As to expression, brain; hypothalamus.

Its subcellular location is the cell membrane. Functionally, receptor for neuropeptide Y and peptide YY. The activity of this receptor is mediated by G proteins that inhibit adenylate cyclase activity. Seems to be associated with food intake. Could be involved in feeding disorders. The polypeptide is Neuropeptide Y receptor type 5 (NPY5R) (Homo sapiens (Human)).